We begin with the raw amino-acid sequence, 213 residues long: MQGWIVRISHWNTYLPIAGTMQACGDKSSVWKVAIGYNGHPEEATFFNGRRSYAVNNRGAKPEKERTLRLNIEITPVESQGCNQLPTPATFEFRIPHSHFFNWSVELYFHNAVLPSYRCHFCPRPSLVLRTHAISAEYSWLAVDITLGLNRHHNIAVEYVKYIKHLEVGKDIICQLLYLSGYFLYVVPLSIPTKYSKYVSQCTVDPYREAGGF.

Its function is as follows. Part of the gene cluster that mediates the biosynthesis of andrastins, meroterpenoid compounds that exhibit inhibitory activity against ras farnesyltransferase, suggesting that they could be promising leads for antitumor agents. The first step of the pathway is the synthesis of 3,5-dimethylorsellinic acid (DMOA) by the polyketide synthase adrD via condensation of one acetyl-CoA starter unit with 3 malonyl-CoA units and 2 methylations. DMAO is then converted to farnesyl-DMAO by the prenyltransferase adrG. The methyltransferase adrK catalyzes the methylation of the carboxyl group of farnesyl-DMAO to farnesyl-DMAO methyl ester which is further converted to epoxyfarnesyl-DMAO methyl ester by the FAD-dependent monooxygenase adrH. The terpene cyclase adrI then catalyzes the carbon skeletal rearrangement to generate the andrastin E, the first compound in the pathway having the andrastin scaffold, with the tetracyclic ring system. The post-cyclization tailoring enzymes adrF, adrE, adrJ, and adrA, are involved in the conversion of andrastin E into andrastin A. The short chain dehydrogenase adrF is responsible for the oxidation of the C-3 a hydroxyl group of andrastin E to yield the corresponding ketone, andrastin D. The ketoreductase adrE stereoselectively reduces the carbonyl moiety to reverse the stereochemistry of the C-3 position to yield andrastin F. The acetyltransferase adrJ is the acetyltransferase that attaches the acetyl group to the C-3 hydroxyl group of andrastin F to yield andrastin C. Finally, the cytochrome P450 monooxygenase adrA catalyzes two sequential oxidation reactions of the C-23 methyl group, to generate the corresponding alcohol andrastin B, and aldehyde andrastin A. The polypeptide is Andrastin A biosynthesis cluster protein B (Penicillium rubens (strain ATCC 28089 / DSM 1075 / NRRL 1951 / Wisconsin 54-1255) (Penicillium chrysogenum)).